Consider the following 260-residue polypeptide: Adenosylcobinamide-GDP ribazoletransferase (260 aa).

A run of 6 helical transmembrane segments spans residues alanine 40–leucine 60, threonine 64–leucine 84, tyrosine 117–isoleucine 137, proline 142–tryptophan 162, histidine 188–leucine 208, and proline 210–arginine 230.

Belongs to the CobS family. Mg(2+) is required as a cofactor.

The protein resides in the cell inner membrane. It carries out the reaction alpha-ribazole + adenosylcob(III)inamide-GDP = adenosylcob(III)alamin + GMP + H(+). The enzyme catalyses alpha-ribazole 5'-phosphate + adenosylcob(III)inamide-GDP = adenosylcob(III)alamin 5'-phosphate + GMP + H(+). The protein operates within cofactor biosynthesis; adenosylcobalamin biosynthesis; adenosylcobalamin from cob(II)yrinate a,c-diamide: step 7/7. Its function is as follows. Joins adenosylcobinamide-GDP and alpha-ribazole to generate adenosylcobalamin (Ado-cobalamin). Also synthesizes adenosylcobalamin 5'-phosphate from adenosylcobinamide-GDP and alpha-ribazole 5'-phosphate. In Rhizobium etli (strain ATCC 51251 / DSM 11541 / JCM 21823 / NBRC 15573 / CFN 42), this protein is Adenosylcobinamide-GDP ribazoletransferase.